Reading from the N-terminus, the 393-residue chain is Elongation factor Tu (393 aa).

One can recognise a tr-type G domain in the interval 10–203 (KPHVNIGTIG…AVDSYIPQPV (194 aa)). A G1 region spans residues 19-26 (GHVDHGKT). 19-26 (GHVDHGKT) lines the GTP pocket. Thr26 lines the Mg(2+) pocket. The interval 60–64 (GITIS) is G2. Positions 81–84 (DCPG) are G3. Residues 81 to 85 (DCPGH) and 136 to 139 (NKVD) each bind GTP. The segment at 136–139 (NKVD) is G4. A G5 region spans residues 173–175 (SAL).

The protein belongs to the TRAFAC class translation factor GTPase superfamily. Classic translation factor GTPase family. EF-Tu/EF-1A subfamily. In terms of assembly, monomer.

The protein localises to the cytoplasm. It catalyses the reaction GTP + H2O = GDP + phosphate + H(+). In terms of biological role, GTP hydrolase that promotes the GTP-dependent binding of aminoacyl-tRNA to the A-site of ribosomes during protein biosynthesis. This chain is Elongation factor Tu, found in Chlorobaculum tepidum (strain ATCC 49652 / DSM 12025 / NBRC 103806 / TLS) (Chlorobium tepidum).